Reading from the N-terminus, the 315-residue chain is uncharacterized protein (315 aa).

A run of 3 helical transmembrane segments spans residues 19-39, 56-76, and 81-101; these read IGAGAATIASAGAAIGIGNVF, TVLVVTLTLLGGVAAFYLHSF, and PLKKIIYLFLVFFIAVGISLI. Residues 154 to 171 are compositionally biased toward polar residues; sequence EDSASSGRTSSSVNQPIQ. The interval 154 to 214 is disordered; it reads EDSASSGRTS…EREARAQEHD (61 aa). A compositionally biased stretch (basic and acidic residues) spans 203-214; the sequence is GGEREARAQEHD.

This sequence belongs to the ATPase C chain family.

The protein localises to the mitochondrion membrane. This is an uncharacterized protein from Arabidopsis thaliana (Mouse-ear cress).